We begin with the raw amino-acid sequence, 136 residues long: ATP synthase F(0) complex subunit C1, mitochondrial (136 aa).

The N-terminal 61 residues, 1 to 61 (MQTTGALLIS…REFQTSVVSR (61 aa)), are a transit peptide targeting the mitochondrion. A helical transmembrane segment spans residues 77-97 (VGVAGSGAGIGTVFGSLIIGY). Lys-104 is modified (N6,N6,N6-trimethyllysine). Residues 112 to 132 (ILGFALFEAMGLFCLMVAFLI) traverse the membrane as a helical segment.

The protein belongs to the ATPase C chain family. In terms of assembly, homooctamer; the c-ring consists of eight c subunits forming a circle, and each subunit adopts a hairpin shape. Component of the ATP synthase complex composed at least of ATP5F1A/subunit alpha, ATP5F1B/subunit beta, ATP5MC1/subunit c (homooctomer), MT-ATP6/subunit a, MT-ATP8/subunit 8, ATP5ME/subunit e, ATP5MF/subunit f, ATP5MG/subunit g, ATP5MK/subunit k, ATP5MJ/subunit j, ATP5F1C/subunit gamma, ATP5F1D/subunit delta, ATP5F1E/subunit epsilon, ATP5PF/subunit F6, ATP5PB/subunit b, ATP5PD/subunit d, ATP5PO/subunit OSCP. ATP synthase complex consists of a soluble F(1) head domain (subunits alpha(3) and beta(3)) - the catalytic core - and a membrane F(0) domain - the membrane proton channel (subunits c, a, 8, e, f, g, k and j). These two domains are linked by a central stalk (subunits gamma, delta, and epsilon) rotating inside the F1 region and a stationary peripheral stalk (subunits F6, b, d, and OSCP). Interacts with TMEM70 (homooligomer form); this interaction facilitates the oligomer formation of subunit c/ATP5MC1 (c-ring) and the c-ring membrane insertion and also protects ATP5MC1 against intramitochondrial proteolysis. In terms of processing, trimethylated by ATPSCKMT at Lys-104. Methylation is required for proper incorporation of the C subunit into the ATP synthase complex and mitochondrial respiration.

It localises to the mitochondrion membrane. It catalyses the reaction H(+)(in) = H(+)(out). Functionally, subunit c, of the mitochondrial membrane ATP synthase complex (F(1)F(0) ATP synthase or Complex V) that produces ATP from ADP in the presence of a proton gradient across the membrane which is generated by electron transport complexes of the respiratory chain. ATP synthase complex consist of a soluble F(1) head domain - the catalytic core - and a membrane F(1) domain - the membrane proton channel. These two domains are linked by a central stalk rotating inside the F(1) region and a stationary peripheral stalk. During catalysis, ATP synthesis in the catalytic domain of F(1) is coupled via a rotary mechanism of the central stalk subunits to proton translocation. With the subunit a (MT-ATP6), forms the proton-conducting channel in the F(0) domain, that contains two crucial half-channels (inlet and outlet) that facilitate proton movement from the mitochondrial intermembrane space (IMS) into the matrix. Protons are taken up via the inlet half-channel and released through the outlet half-channel, following a Grotthuss mechanism. This Sus scrofa (Pig) protein is ATP synthase F(0) complex subunit C1, mitochondrial.